The chain runs to 130 residues: Small ribosomal subunit protein uS9 (130 aa).

It belongs to the universal ribosomal protein uS9 family.

The protein is Small ribosomal subunit protein uS9 of Aeromonas salmonicida (strain A449).